Consider the following 776-residue polypeptide: Microtubule-associated protein tau (776 aa).

Basic and acidic residues predominate over residues 1-26 (MAEPRQEFDVMEDHAGTYGLGDRKDQ). Positions 1 to 591 (MAEPRQEFDV…PVPMPDLKNV (591 aa)) are disordered. Residue A2 is modified to N-acetylalanine. Phosphotyrosine is present on residues Y18 and Y29. K44 participates in a covalent cross-link: Glycyl lysine isopeptide (Lys-Gly) (interchain with G-Cter in ubiquitin). 2 positions are modified to phosphoserine: S46 and S61. Positions 61–71 (SETSDAKSTPT) are enriched in polar residues. Phosphothreonine is present on residues T69, T71, and T111. 2 stretches are compositionally biased toward basic and acidic residues: residues 179–189 (EGGRHAPELLK) and 207–216 (GGKERPGIKE). Residues 217-228 (EVDEDRDVDESS) are compositionally biased toward acidic residues. Positions 314–323 (EQAHSEEHLG) are enriched in basic and acidic residues. The segment covering 325–340 (AAFPGAPGEGPEAQGP) has biased composition (low complexity). Composition is skewed to basic and acidic residues over residues 344–356 (EDTK…EPSE) and 381–393 (KSKD…DKKA). The segment covering 442–453 (VSSVTXRTGSSG) has biased composition (low complexity). Residues 455-466 (KEMKLKGADGKT) show a composition bias toward basic and acidic residues. At T470 the chain carries Phosphothreonine. The residue at position 472 (R472) is an Omega-N-methylarginine. N6,N6-dimethyllysine; alternate is present on K480. Position 480 is an N6-acetyllysine; alternate (K480). Phosphothreonine is present on residues T486, T492, and T498. S502, S526, and S530 each carry phosphoserine. Positions 517-528 (KSERGEPPKSGD) are enriched in basic and acidic residues. The segment covering 529 to 549 (RSGYSSPGSPGTPGSRSRTPS) has biased composition (low complexity). Y532 bears the Phosphotyrosine mark. Phosphoserine is present on residues S533, S534, and S537. T540 and T547 each carry phosphothreonine. Position 549 is a phosphoserine (S549). T552 is modified (phosphothreonine). K560 carries the post-translational modification N6-acetyllysine. At T566 the chain carries Phosphothreonine. Phosphoserine occurs at positions 570 and 572. Tau/MAP repeat units follow at residues 579–609 (QTAP…GGGK), 610–640 (VQII…GGGS), 641–671 (VQIV…GGGQ), and 672–703 (VEVK…GGGN). K589 is covalently cross-linked (Glycyl lysine isopeptide (Lys-Gly) (interchain with G-Cter in ubiquitin)). Residue K594 is modified to N6-acetyllysine; alternate. At K594 the chain carries N6-methyllysine; alternate. Residue K594 forms a Glycyl lysine isopeptide (Lys-Gly) (interchain with G-Cter in ubiquitin); alternate linkage. S597 is modified (phosphoserine). K602 participates in a covalent cross-link: Glycyl lysine isopeptide (Lys-Gly) (interchain with G-Cter in ubiquitin). Position 616 is an N6-acetyllysine; alternate (K616). K616 participates in a covalent cross-link: Glycyl lysine isopeptide (Lys-Gly) (interchain with G-Cter in ubiquitin); alternate. Phosphoserine occurs at positions 620 and 624. K625 bears the N6-acetyllysine mark. A Phosphoserine modification is found at S628. An N6-acetyllysine; alternate modification is found at K633. K633 participates in a covalent cross-link: Glycyl lysine isopeptide (Lys-Gly) (interchain with G-Cter in ubiquitin); alternate. The residue at position 640 (S640) is a Phosphoserine. K646 is modified (N6,N6-dimethyllysine; alternate). N6-acetyllysine; alternate occurs at positions 646, 652, and 656. Glycyl lysine isopeptide (Lys-Gly) (interchain with G-Cter in ubiquitin); alternate cross-links involve residues K646, K652, and K656. The residue at position 659 (S659) is a Phosphoserine. K666, K678, and K682 each carry N6-acetyllysine; alternate. Glycyl lysine isopeptide (Lys-Gly) (interchain with G-Cter in ubiquitin); alternate cross-links involve residues K666, K678, and K682. Position 684 is an omega-N-methylarginine (R684). Phosphoserine is present on S687. A Glycyl lysine isopeptide (Lys-Gly) (interchain with G-Cter in ubiquitin) cross-link involves residue K688. S691 carries the post-translational modification Phosphoserine. K704 carries the N6-acetyllysine; alternate modification. A Glycyl lysine isopeptide (Lys-Gly) (interchain with G-Cter in ubiquitin); alternate cross-link involves residue K704. Residue K710 forms a Glycyl lysine isopeptide (Lys-Gly) (interchain with G-Cter in ubiquitin) linkage. K720 bears the N6-acetyllysine; alternate mark. A Glycyl lysine isopeptide (Lys-Gly) (interchain with G-Cter in ubiquitin); alternate cross-link involves residue K720. Y729 bears the Phosphotyrosine mark. Phosphoserine is present on residues S731 and S735. A disordered region spans residues 733–752 (VVSGDTSPRHLSNVSSTGSI). Over residues 736–751 (GDTSPRHLSNVSSTGS) the composition is skewed to polar residues. Residue T738 is modified to Phosphothreonine. A phosphoserine mark is found at S739, S744, S751, and S757. T762 carries the phosphothreonine modification.

Interacts with MARK1, MARK2, MARK3 and MARK4. Interacts with SQSTM1 when polyubiquitinated. Interacts with PSMC2 through SQSTM1. Interacts with FKBP4. Binds to CSNK1D. Interacts with SGK1. Interacts with EPM2A; the interaction dephosphorylates MAPT at Ser-396. Interacts with PIN1. Interacts with LRRK2. Interacts with LRP1, leading to endocytosis; this interaction is reduced in the presence of LRPAP1/RAP. Post-translationally, polyubiquitinated. Requires functional TRAF6 and may provoke SQSTM1-dependent degradation by the proteasome. Phosphorylation at various serine and threonine residues in S-P or T-P motifs by proline-directed protein kinases (PDPK1, CDK1, CDK5, GSK3, MAPK) (a few sites per protein in interphase, more in mitosis), and at serine residues in K-X-G-S motifs by MAP/microtubule affinity-regulating kinase (MARK1, MARK2, MARK3 or MARK4), causing detachment from microtubules, and their disassembly. Phosphorylation at Ser-597 by BRSK1 and BRSK2 in neurons affects ability to bind microtubules and plays a role in neuron polarization. Phosphorylated by PHK. Dephosphorylation at several serine and threonine residues by the serine/threonine phosphatase PPP5C.

Its subcellular location is the cytoplasm. It localises to the cytosol. The protein resides in the cell membrane. It is found in the cytoskeleton. The protein localises to the cell projection. Its subcellular location is the axon. It localises to the dendrite. Promotes microtubule assembly and stability, and might be involved in the establishment and maintenance of neuronal polarity. The C-terminus binds axonal microtubules while the N-terminus binds neural plasma membrane components, suggesting that tau functions as a linker protein between both. Axonal polarity is predetermined by tau localization (in the neuronal cell) in the domain of the cell body defined by the centrosome. The short isoforms allow plasticity of the cytoskeleton whereas the longer isoforms may preferentially play a role in its stabilization. In Hylobates lar (Lar gibbon), this protein is Microtubule-associated protein tau (MAPT).